A 251-amino-acid chain; its full sequence is Imidazole glycerol phosphate synthase subunit HisF (251 aa).

Catalysis depends on residues aspartate 11 and aspartate 130.

The protein belongs to the HisA/HisF family. In terms of assembly, heterodimer of HisH and HisF.

It is found in the cytoplasm. The catalysed reaction is 5-[(5-phospho-1-deoxy-D-ribulos-1-ylimino)methylamino]-1-(5-phospho-beta-D-ribosyl)imidazole-4-carboxamide + L-glutamine = D-erythro-1-(imidazol-4-yl)glycerol 3-phosphate + 5-amino-1-(5-phospho-beta-D-ribosyl)imidazole-4-carboxamide + L-glutamate + H(+). It functions in the pathway amino-acid biosynthesis; L-histidine biosynthesis; L-histidine from 5-phospho-alpha-D-ribose 1-diphosphate: step 5/9. IGPS catalyzes the conversion of PRFAR and glutamine to IGP, AICAR and glutamate. The HisF subunit catalyzes the cyclization activity that produces IGP and AICAR from PRFAR using the ammonia provided by the HisH subunit. In Listeria welshimeri serovar 6b (strain ATCC 35897 / DSM 20650 / CCUG 15529 / CIP 8149 / NCTC 11857 / SLCC 5334 / V8), this protein is Imidazole glycerol phosphate synthase subunit HisF.